The sequence spans 360 residues: 3-isopropylmalate dehydrogenase (360 aa).

Position 76-89 (Gly-76–Glu-89) interacts with NAD(+). Residues Arg-96, Arg-106, Arg-134, and Asp-224 each coordinate substrate. Residues Asp-224, Asp-248, and Asp-252 each coordinate Mg(2+). NAD(+) is bound at residue Gly-282 to Asn-294.

The protein belongs to the isocitrate and isopropylmalate dehydrogenases family. LeuB type 1 subfamily. In terms of assembly, homodimer. Mg(2+) is required as a cofactor. The cofactor is Mn(2+).

It localises to the cytoplasm. It carries out the reaction (2R,3S)-3-isopropylmalate + NAD(+) = 4-methyl-2-oxopentanoate + CO2 + NADH. It functions in the pathway amino-acid biosynthesis; L-leucine biosynthesis; L-leucine from 3-methyl-2-oxobutanoate: step 3/4. Its function is as follows. Catalyzes the oxidation of 3-carboxy-2-hydroxy-4-methylpentanoate (3-isopropylmalate) to 3-carboxy-4-methyl-2-oxopentanoate. The product decarboxylates to 4-methyl-2 oxopentanoate. The polypeptide is 3-isopropylmalate dehydrogenase (Pseudomonas fluorescens (strain ATCC BAA-477 / NRRL B-23932 / Pf-5)).